The primary structure comprises 527 residues: Rhesus-like glycoprotein A (527 aa).

Topologically, residues methionine 1–proline 18 are cytoplasmic. Residues isoleucine 19–leucine 39 traverse the membrane as a helical segment. The Extracellular segment spans residues threonine 40–tyrosine 70. Residue asparagine 47 is glycosylated (N-linked (GlcNAc...) asparagine). Residues glycine 71 to leucine 91 traverse the membrane as a helical segment. At arginine 92–leucine 99 the chain is on the cytoplasmic side. The chain crosses the membrane as a helical span at residues glycine 100–phenylalanine 120. Residues glutamate 121–aspartate 141 lie on the Extracellular side of the membrane. A helical transmembrane segment spans residues serine 142–glycine 162. The Cytoplasmic portion of the chain corresponds to arginine 163–proline 166. A helical membrane pass occupies residues leucine 167–glycine 187. The Extracellular segment spans residues glutamate 188–aspartate 195. The helical transmembrane segment at valine 196–phenylalanine 216 threads the bilayer. The Cytoplasmic portion of the chain corresponds to leucine 217–asparagine 236. A helical membrane pass occupies residues phenylalanine 237–alanine 257. Residues proline 258 to glutamine 263 lie on the Extracellular side of the membrane. A helical membrane pass occupies residues phenylalanine 264–valine 284. The Cytoplasmic segment spans residues serine 285–histidine 299. The helical transmembrane segment at valine 300 to isoleucine 319 threads the bilayer. At asparagine 320 to proline 321 the chain is on the extracellular side. The chain crosses the membrane as a helical span at residues glycine 322–isoleucine 342. Residues threonine 343–glycine 357 are Cytoplasmic-facing. A helical membrane pass occupies residues isoleucine 358–isoleucine 378. The Extracellular portion of the chain corresponds to lysine 379–asparagine 406. Residues leucine 407–isoleucine 427 form a helical membrane-spanning segment. Residues leucine 428 to isoleucine 527 are Cytoplasmic-facing. Residues serine 471–isoleucine 527 form a disordered region. Residues glycine 483–lysine 495 are compositionally biased toward basic and acidic residues. The segment covering serine 514 to isoleucine 527 has biased composition (acidic residues).

The protein belongs to the ammonium transporter (TC 2.A.49) family. Rh subfamily. Interacts with ap1g1.

It localises to the contractile vacuole. It is found in the membrane. Functionally, may be a carbon dioxide/bicarbonate transporter. The sequence is that of Rhesus-like glycoprotein A (rhgA) from Dictyostelium discoideum (Social amoeba).